The primary structure comprises 330 residues: uncharacterized protein (330 aa).

Transmembrane regions (helical) follow at residues 15–35 (LTLI…KGVL), 41–61 (FFVA…WAMG), 72–92 (GWGW…GFLA), 102–122 (LGSV…SWLF), 125–145 (VIGG…SLIG), 175–195 (LWML…PFVS), 201–221 (VVAT…IALV), 238–258 (LAYA…YLAS), 264–284 (SLSS…NLIL), and 286–306 (EQLS…IYLI). EamA domains are found at residues 22–146 (FLWG…LIGL) and 182–308 (LSMA…LINQ).

This sequence belongs to the EamA transporter family.

The protein resides in the cell membrane. This is an uncharacterized protein from Synechocystis sp. (strain ATCC 27184 / PCC 6803 / Kazusa).